The following is a 354-amino-acid chain: Guanine nucleotide-binding protein G(o) subunit alpha (354 aa).

Gly-2 is lipidated: N-myristoyl glycine. Cys-3 carries S-palmitoyl cysteine lipidation. The 323-residue stretch at Lys-32 to Tyr-354 folds into the G-alpha domain. A G1 motif region spans residues Lys-35–Thr-48. GTP-binding positions include Gly-40–Ser-47, Leu-176–Thr-182, Asp-201–Gln-205, Asn-270–Asp-273, and Ala-326. Mg(2+)-binding residues include Ser-47 and Thr-182. The segment at Asp-174–Thr-182 is G2 motif. The segment at Phe-197–Arg-206 is G3 motif. The segment at Ile-266 to Asp-273 is G4 motif. Residues Thr-324–Thr-329 form a G5 motif region.

The protein belongs to the G-alpha family. G(i/o/t/z) subfamily. G proteins are composed of 3 units; alpha, beta and gamma. The alpha chain contains the guanine nucleotide binding site.

In terms of biological role, guanine nucleotide-binding proteins (G proteins) are involved as modulators or transducers in various transmembrane signaling systems. The G(o) protein function is not clear. The sequence is that of Guanine nucleotide-binding protein G(o) subunit alpha from Locusta migratoria (Migratory locust).